The primary structure comprises 160 residues: Heme transporter hrg-5 (160 aa).

A helical membrane pass occupies residues 21-41 (IALTILDILIGFSNILSYAIQ). Residue Asn44 is glycosylated (N-linked (GlcNAc...) asparagine). The next 3 helical transmembrane spans lie at 47–67 (ALTL…MFLA), 89–109 (ITLG…AGVT), and 123–142 (FTGL…ALLA). The N-linked (GlcNAc...) asparagine glycan is linked to Asn144.

It belongs to the HRG family.

It is found in the membrane. Its function is as follows. Heme transporter. This Caenorhabditis elegans protein is Heme transporter hrg-5 (hrg-5).